Reading from the N-terminus, the 530-residue chain is uncharacterized protein (530 aa).

The protein belongs to the mimivirus R640 family.

This is an uncharacterized protein from Acanthamoeba polyphaga (Amoeba).